The primary structure comprises 429 residues: 3-phosphoshikimate 1-carboxyvinyltransferase (429 aa).

3 residues coordinate 3-phosphoshikimate: lysine 21, serine 22, and arginine 26. Position 21 (lysine 21) interacts with phosphoenolpyruvate. Residues glycine 94 and arginine 122 each coordinate phosphoenolpyruvate. 3-phosphoshikimate contacts are provided by serine 167, glutamine 169, aspartate 315, and lysine 342. Glutamine 169 contacts phosphoenolpyruvate. Aspartate 315 serves as the catalytic Proton acceptor. The phosphoenolpyruvate site is built by arginine 346 and arginine 388.

The protein belongs to the EPSP synthase family. As to quaternary structure, monomer.

The protein resides in the cytoplasm. The enzyme catalyses 3-phosphoshikimate + phosphoenolpyruvate = 5-O-(1-carboxyvinyl)-3-phosphoshikimate + phosphate. The protein operates within metabolic intermediate biosynthesis; chorismate biosynthesis; chorismate from D-erythrose 4-phosphate and phosphoenolpyruvate: step 6/7. In terms of biological role, catalyzes the transfer of the enolpyruvyl moiety of phosphoenolpyruvate (PEP) to the 5-hydroxyl of shikimate-3-phosphate (S3P) to produce enolpyruvyl shikimate-3-phosphate and inorganic phosphate. This Desulforudis audaxviator (strain MP104C) protein is 3-phosphoshikimate 1-carboxyvinyltransferase.